The primary structure comprises 141 residues: Large ribosomal subunit protein uL11 (141 aa).

This sequence belongs to the universal ribosomal protein uL11 family. Part of the ribosomal stalk of the 50S ribosomal subunit. Interacts with L10 and the large rRNA to form the base of the stalk. L10 forms an elongated spine to which L12 dimers bind in a sequential fashion forming a multimeric L10(L12)X complex. In terms of processing, one or more lysine residues are methylated.

Forms part of the ribosomal stalk which helps the ribosome interact with GTP-bound translation factors. The sequence is that of Large ribosomal subunit protein uL11 from Cyanothece sp. (strain PCC 7425 / ATCC 29141).